Consider the following 764-residue polypeptide: Mitogen-activated protein kinase kinase kinase 1b (764 aa).

4 disordered regions span residues 1–81 (MVEE…IQQQ), 120–260 (KSIA…TATR), 325–348 (PNLA…SSAM), and 360–392 (VPEL…HYGS). Over residues 14 to 30 (GSWGSGEDGGSSHGGKG) the composition is skewed to gly residues. Low complexity-rich tracts occupy residues 60–76 (VHST…LSKS) and 125–135 (SQPLSSPSLSQ). Over residues 136–145 (EHGEASHSND) the composition is skewed to basic and acidic residues. Residues 184–201 (YVNSQPQNHYGRKNSPSQ) show a composition bias toward polar residues. Positions 431–684 (WFKGDFIGSG…CDMLLTHPFI (254 aa)) constitute a Protein kinase domain. ATP is bound by residues 437-445 (IGSGTFGSV) and Lys459. Asp554 acts as the Proton acceptor in catalysis. Residues 706–764 (EERSIDVSESPSIATSSQSGSSPSVAGDAVSPASVAVRPRSMRTLRSEFSMSSPESIAS) form a disordered region. The span at 715–729 (SPSIATSSQSGSSPS) shows a compositional bias: low complexity. Over residues 752–764 (SEFSMSSPESIAS) the composition is skewed to polar residues.

This sequence belongs to the protein kinase superfamily. STE Ser/Thr protein kinase family. MAP kinase kinase kinase subfamily.

It is found in the cell membrane. It catalyses the reaction L-seryl-[protein] + ATP = O-phospho-L-seryl-[protein] + ADP + H(+). The catalysed reaction is L-threonyl-[protein] + ATP = O-phospho-L-threonyl-[protein] + ADP + H(+). The CERK1, MEKK1a/b, MKK1a/b/c and MPK4a/b proteins are involved in pathogen defense. The pathway induces rapid growth inhibition, cell wall depositions and accumulation of defense-related transcripts. This protein is required for responses to chitin and acts redundantly with MEKK1a. The chain is Mitogen-activated protein kinase kinase kinase 1b (MEKK1b) from Physcomitrium patens (Spreading-leaved earth moss).